The chain runs to 803 residues: Putative metal ion transporter C27B12.12c (803 aa).

The span at 1-20 (MSFQQPSNGAQGGNNNALEK) shows a compositional bias: polar residues. A disordered region spans residues 1–255 (MSFQQPSNGA…SSDVSGSDEN (255 aa)). Over residues 21-45 (TSSNEATSSSSTQVSSLSASGISVS) the composition is skewed to low complexity. The span at 58-82 (MQVQSSQHLEANVQSPVSSQTTYAT) shows a compositional bias: polar residues. Basic residues-rich tracts occupy residues 105–123 (KPKK…RKKI) and 152–166 (QSNK…KHSP). 2 stretches are compositionally biased toward low complexity: residues 181–194 (ALSA…QHAS) and 218–253 (SSSS…SGSD). S318 carries the phosphoserine modification. Disordered regions lie at residues 326–349 (PRLK…QVDE) and 406–431 (FEPH…NNAE). The segment covering 337 to 347 (DNEDREVDSQV) has biased composition (acidic residues). Residues 406 to 419 (FEPHWNDLSPHDPN) show a composition bias toward basic and acidic residues. The segment covering 420–430 (DPSSSLHSNNA) has biased composition (polar residues). Residues S449 and S452 each carry the phosphoserine modification. The next 2 membrane-spanning stretches (helical) occupy residues 745-765 (ITLI…FGMN) and 776-796 (LAWF…GWII).

Belongs to the CorA metal ion transporter (MIT) (TC 1.A.35) family.

Its subcellular location is the cytoplasm. The protein resides in the membrane. The polypeptide is Putative metal ion transporter C27B12.12c (Schizosaccharomyces pombe (strain 972 / ATCC 24843) (Fission yeast)).